The following is a 213-amino-acid chain: Endoplasmic reticulum vesicle protein 25 (213 aa).

The signal sequence occupies residues 1–20 (MILRIPSLLYLFTLLTAVYA). The Lumenal segment spans residues 21–181 (VKFDLTSDRN…TNESTNQRVK (161 aa)). In terms of domain architecture, GOLD spans 33-122 (PKCIWNFASA…VRSVELDVDI (90 aa)). Residues 182 to 202 (VFSVLIICCTIGLGVWQLLHL) traverse the membrane as a helical segment. Topologically, residues 203-213 (RSFFKRKYLID) are cytoplasmic.

The protein belongs to the EMP24/GP25L family.

It localises to the endoplasmic reticulum membrane. It is found in the golgi apparatus membrane. Constituent of COPII-coated endoplasmic reticulum-derived transport vesicles. Required for efficient transport of a subset of secretory proteins to the Golgi. Facilitates retrograde transport from the Golgi to the endoplasmic reticulum. This is Endoplasmic reticulum vesicle protein 25 (ERV25) from Cryptococcus neoformans var. neoformans serotype D (strain JEC21 / ATCC MYA-565) (Filobasidiella neoformans).